The primary structure comprises 459 residues: Interleukin-1 receptor-associated kinase 4 (459 aa).

Position 1 is an N-acetylmethionine (M1). Residues 20–104 enclose the Death domain; the sequence is RKLSDFIDPQ…APATLLLPDA (85 aa). Residue K34 is modified to N6-acetyllysine. Positions 115 to 161 are disordered; that stretch reads REAATVAQTHGPCQEKDRTSVMPMPKLEHSCEPPDSSSPDNRSVESS. One can recognise a Protein kinase domain in the interval 186–454; that stretch reads SAGGNRMGEG…PDIAKVQQLL (269 aa). ATP contacts are provided by residues 192 to 200 and K213; that span reads MGEGGFGVV. Catalysis depends on D311, which acts as the Proton acceptor. ATP-binding positions include 313–316 and D329; that span reads KSAN. A phosphothreonine mark is found at T342 and T345. S346 is subject to Phosphoserine.

The protein belongs to the protein kinase superfamily. TKL Ser/Thr protein kinase family. Pelle subfamily. In terms of assembly, associates with MYD88 and IRAK2 to form a ternary complex called the Myddosome. Once phosphorylated, IRAK4 dissociates from the receptor complex and then associates with the TNF receptor-associated factor 6 (TRAF6), IRAK1, and PELI1; this intermediate complex is required for subsequent NF-kappa-B activation. Direct binding of SMAD6 to PELI1 prevents complex formation and hence negatively regulates IL1R-TLR signaling and eventually NF-kappa-B-mediated gene expression. Interacts with IL1RL1. Interacts (when phosphorylated) with IRAK1. May interact (when phosphorylated) with IRAK3. Mg(2+) is required as a cofactor. Phosphorylated.

It localises to the cytoplasm. The catalysed reaction is L-seryl-[protein] + ATP = O-phospho-L-seryl-[protein] + ADP + H(+). It carries out the reaction L-threonyl-[protein] + ATP = O-phospho-L-threonyl-[protein] + ADP + H(+). Its function is as follows. Serine/threonine-protein kinase that plays a critical role in initiating innate immune response against foreign pathogens. Involved in Toll-like receptor (TLR) and IL-1R signaling pathways. Is rapidly recruited by MYD88 to the receptor-signaling complex upon TLR activation to form the Myddosome together with IRAK2. Phosphorylates initially IRAK1, thus stimulating the kinase activity and intensive autophosphorylation of IRAK1. Phosphorylates E3 ubiquitin ligases Pellino proteins (PELI1, PELI2 and PELI3) to promote pellino-mediated polyubiquitination of IRAK1. Then, the ubiquitin-binding domain of IKBKG/NEMO binds to polyubiquitinated IRAK1 bringing together the IRAK1-MAP3K7/TAK1-TRAF6 complex and the NEMO-IKKA-IKKB complex. In turn, MAP3K7/TAK1 activates IKKs (CHUK/IKKA and IKBKB/IKKB) leading to NF-kappa-B nuclear translocation and activation. Alternatively, phosphorylates TIRAP to promote its ubiquitination and subsequent degradation. Phosphorylates NCF1 and regulates NADPH oxidase activation after LPS stimulation suggesting a similar mechanism during microbial infections. The polypeptide is Interleukin-1 receptor-associated kinase 4 (Irak4) (Mus musculus (Mouse)).